Consider the following 193-residue polypeptide: MIGRIAGILLEKNPPHLLVDCNGVGYEIDVPMSTFYNLPQTGERVVLLTQQIVREDAHLLYGFLTPQERTTFRELLKITGIGARMALAVLSGMSVQELAQAVTMQDAARLTRLPGIGKKTAERLLLELKGKLGADLGALAGAASASDHATDILNALLALGYSEKEGLAAIKNVPAGTGVSEGIKLALKALSKA.

The tract at residues 1 to 64 is domain I; sequence MIGRIAGILL…EDAHLLYGFL (64 aa). The segment at 65–139 is domain II; the sequence is TPQERTTFRE…GKLGADLGAL (75 aa). The segment at 139-143 is flexible linker; it reads LAGAA. Positions 144–193 are domain III; it reads SASDHATDILNALLALGYSEKEGLAAIKNVPAGTGVSEGIKLALKALSKA.

Belongs to the RuvA family. Homotetramer. Forms an RuvA(8)-RuvB(12)-Holliday junction (HJ) complex. HJ DNA is sandwiched between 2 RuvA tetramers; dsDNA enters through RuvA and exits via RuvB. An RuvB hexamer assembles on each DNA strand where it exits the tetramer. Each RuvB hexamer is contacted by two RuvA subunits (via domain III) on 2 adjacent RuvB subunits; this complex drives branch migration. In the full resolvosome a probable DNA-RuvA(4)-RuvB(12)-RuvC(2) complex forms which resolves the HJ.

The protein localises to the cytoplasm. In terms of biological role, the RuvA-RuvB-RuvC complex processes Holliday junction (HJ) DNA during genetic recombination and DNA repair, while the RuvA-RuvB complex plays an important role in the rescue of blocked DNA replication forks via replication fork reversal (RFR). RuvA specifically binds to HJ cruciform DNA, conferring on it an open structure. The RuvB hexamer acts as an ATP-dependent pump, pulling dsDNA into and through the RuvAB complex. HJ branch migration allows RuvC to scan DNA until it finds its consensus sequence, where it cleaves and resolves the cruciform DNA. In Burkholderia cenocepacia (strain HI2424), this protein is Holliday junction branch migration complex subunit RuvA.